A 632-amino-acid polypeptide reads, in one-letter code: 1-deoxy-D-xylulose-5-phosphate synthase (632 aa).

Residues His-78 and 119 to 121 (AHS) contribute to the thiamine diphosphate site. Asp-150 is a binding site for Mg(2+). Residues 151 to 152 (GA), Asn-179, Tyr-286, and Glu-368 each bind thiamine diphosphate. Asn-179 lines the Mg(2+) pocket.

The protein belongs to the transketolase family. DXPS subfamily. Homodimer. Mg(2+) is required as a cofactor. Requires thiamine diphosphate as cofactor.

It carries out the reaction D-glyceraldehyde 3-phosphate + pyruvate + H(+) = 1-deoxy-D-xylulose 5-phosphate + CO2. It functions in the pathway metabolic intermediate biosynthesis; 1-deoxy-D-xylulose 5-phosphate biosynthesis; 1-deoxy-D-xylulose 5-phosphate from D-glyceraldehyde 3-phosphate and pyruvate: step 1/1. Its function is as follows. Catalyzes the acyloin condensation reaction between C atoms 2 and 3 of pyruvate and glyceraldehyde 3-phosphate to yield 1-deoxy-D-xylulose-5-phosphate (DXP). This chain is 1-deoxy-D-xylulose-5-phosphate synthase, found in Albidiferax ferrireducens (strain ATCC BAA-621 / DSM 15236 / T118) (Rhodoferax ferrireducens).